Reading from the N-terminus, the 330-residue chain is MANNTPFAAQPLLTSSELPLTLISLDDWALVTLTGADRVKYLQGQVTADIDALPTDQHVLCAHCDAKGKMWSNLRLFYRGEGLAFIERRSVLDNQLSELKKYAVFSKVVIAAQPDAVLLGVAGTQAKAVLAEVFAELPNADHPVVQQGDSTLLYFSLPAERFLLVTDTEQAQQLVEKLADRAQFNNSKQWLALDIEAGFPIIDTDSSAQFIPQATNIQALNGISFSKGCYTGQEMVARAKYRGANKRALYWLAGSANRAPAVGEDLEWQLGENWRRTGSVLAAITLSDGTVWVQAVLNNDLAADSVLRVRDDAESVLTIQPLPYSLTEDK.

Folate-binding residues include tryptophan 28 and tryptophan 190.

The protein belongs to the tRNA-modifying YgfZ family.

It is found in the cytoplasm. Its function is as follows. Folate-binding protein involved in regulating the level of ATP-DnaA and in the modification of some tRNAs. It is probably a key factor in regulatory networks that act via tRNA modification, such as initiation of chromosomal replication. The chain is tRNA-modifying protein YgfZ from Yersinia enterocolitica serotype O:8 / biotype 1B (strain NCTC 13174 / 8081).